Reading from the N-terminus, the 31-residue chain is U6-ctenitoxin-Co1a (31 aa).

2 disulfide bridges follow: cysteine 2-cysteine 18 and cysteine 9-cysteine 23.

In terms of tissue distribution, expressed by the venom gland.

The protein localises to the secreted. In terms of biological role, antagonist of L-type calcium channels (Cav1/CACNA1). The polypeptide is U6-ctenitoxin-Co1a (Ctenus ornatus (Brazilian spider)).